The sequence spans 645 residues: tRNA 5-methylaminomethyl-2-thiouridine biosynthesis bifunctional protein MnmC (645 aa).

A tRNA (mnm(5)s(2)U34)-methyltransferase region spans residues 1–230; sequence MPMSEPIDWL…KRHNLHAVFD (230 aa). The interval 254 to 645 is FAD-dependent cmnm(5)s(2)U34 oxidoreductase; the sequence is LGAGIAGAAA…LASERLGRRR (392 aa).

This sequence in the N-terminal section; belongs to the methyltransferase superfamily. tRNA (mnm(5)s(2)U34)-methyltransferase family. The protein in the C-terminal section; belongs to the DAO family. It depends on FAD as a cofactor.

It localises to the cytoplasm. The catalysed reaction is 5-aminomethyl-2-thiouridine(34) in tRNA + S-adenosyl-L-methionine = 5-methylaminomethyl-2-thiouridine(34) in tRNA + S-adenosyl-L-homocysteine + H(+). In terms of biological role, catalyzes the last two steps in the biosynthesis of 5-methylaminomethyl-2-thiouridine (mnm(5)s(2)U) at the wobble position (U34) in tRNA. Catalyzes the FAD-dependent demodification of cmnm(5)s(2)U34 to nm(5)s(2)U34, followed by the transfer of a methyl group from S-adenosyl-L-methionine to nm(5)s(2)U34, to form mnm(5)s(2)U34. This is tRNA 5-methylaminomethyl-2-thiouridine biosynthesis bifunctional protein MnmC from Delftia acidovorans (strain DSM 14801 / SPH-1).